Consider the following 362-residue polypeptide: MKHFPSKVLTTAILATFCSGALAATSDDDVKKAATVAIVAAYNNGQEINGFKAGETIYDIGEDGTITQKDATAADVEADDFKGLGLKKVVTNLTKTVNENKQNVDAKVKAAESEIEKLTTKLADTDAALADTDAALDETTNALNKLGENITTFAEETKTNIVKIDEKLEAVADTVDKHAEAFNDIADSLDETNTKADEAVKTANEAKQTAEETKQNVDAKVKAAETAAGKAEAAAGTANTAADKAEAVAAKVTDIKADIATNKADIAKNSARIDSLDKNVANLRKETRQGLAEQAALSGLFQPYNVGRFNVTAAVGGYKSESAVAIGTGFRFTENFAAKAGVAVGTSSGSSAAYHVGVNYEW.

The first 23 residues, 1–23 (MKHFPSKVLTTAILATFCSGALA), serve as a signal peptide directing secretion. Residues 24–169 (ATSDDDVKKA…NIVKIDEKLE (146 aa)) form a head domain region. Coiled coils occupy residues 90–146 (VTNL…LNKL) and 183–288 (NDIA…KETR). The coiled stalk domain stretch occupies residues 170-307 (AVADTVDKHA…SGLFQPYNVG (138 aa)). A run of 4 beta stranded transmembrane segments spans residues 307-317 (GRFNVTAAVGG), 321-332 (ESAVAIGTGFRF), 339-345 (KAGVAVG), and 351-362 (SAAYHVGVNYEW). A translocator domain region spans residues 308–362 (RFNVTAAVGGYKSESAVAIGTGFRFTENFAAKAGVAVGTSSGSSAAYHVGVNYEW).

Belongs to the autotransporter-2 (AT-2) (TC 1.B.40) family. In terms of assembly, forms high molecular weight oligomers in whole cell extracts that are not disrupted by boiling in SDS buffer. Homotrimer. A fragment containing the N-terminal half of the mature protein (residues 24-210, head domain plus part of the stalk) binds human integrin beta-1 (ITGB1). It was not seen to bind immobilized purified CEACAMs 1, 3, 5, 6 or 8 nor commercially prepared type I collagen, fibronectin or matrigel.

Its subcellular location is the cell surface. It localises to the cell outer membrane. Functionally, adheres to and induces bacterial uptake by human epithelial cells. Upon expression in engineered Y.enterocolitica confers an 11- to 15-fold increase in bacterial adherence and uptake by human epithelial cell lines; part of the uptake is mediated by integrin beta-1 (ITGB1) suggesting it may be a human receptor for NadA. A bacterial cell surface protein; antisera against this protein induce complement-mediated killing of this and other strains. In Neisseria meningitidis serogroup B (strain ATCC BAA-335 / MC58), this protein is Neisseria adhesin A.